The primary structure comprises 204 residues: Large ribosomal subunit protein eL15 (204 aa).

The protein belongs to the eukaryotic ribosomal protein eL15 family. As to quaternary structure, component of the large ribosomal subunit.

It is found in the cytoplasm. Component of the large ribosomal subunit. The ribosome is a large ribonucleoprotein complex responsible for the synthesis of proteins in the cell. The polypeptide is Large ribosomal subunit protein eL15 (rpl15) (Tachysurus fulvidraco (Yellow catfish)).